The chain runs to 418 residues: AA11 family lytic polysaccharide monooxygenase B (418 aa).

Residues 1 to 21 (MMFSKSGLVAVAMLGASAVEA) form the signal peptide. The Cu(+) site is built by histidine 22 and histidine 82. Cystine bridges form between cysteine 50–cysteine 165, cysteine 87–cysteine 113, and cysteine 206–cysteine 240. 2 N-linked (GlcNAc...) asparagine glycosylation sites follow: asparagine 120 and asparagine 134. Residues 226-345 (DGNPSNLQPA…SSSSSNGALT (120 aa)) are disordered. Residues 254–345 (SPSTPSTSSS…SSSSSNGALT (92 aa)) are compositionally biased toward low complexity.

It belongs to the polysaccharide monooxygenase AA11 family. Cu(2+) is required as a cofactor.

It is found in the secreted. In terms of biological role, lytic polysaccharide monooxygenase (LPMO)-like protein that acts as a strict peroxygenase and does not catalyze a monooxygenase reaction. It is indeed hardly active on chitin, while being very active on soluble oligomers of N-acetylglucosamine. Cleaves the glycosidic bonds byoxidizing the C1 position. Also unable to oxidize cellopentaose. Probably breaks glycosidic bonds in non-polymeric substrates possibly carbohydrates in the cell wall of the fungus or its competitors. In the presence of chitotetraose, the enzyme can withstand considerable amounts of H(2)O(2), which it uses to efficiently and stoichiometrically convert this substrate. The polypeptide is AA11 family lytic polysaccharide monooxygenase B (Aspergillus fumigatus (strain ATCC MYA-4609 / CBS 101355 / FGSC A1100 / Af293) (Neosartorya fumigata)).